The primary structure comprises 256 residues: DNA repair protein RecO (256 aa).

This sequence belongs to the RecO family.

Its function is as follows. Involved in DNA repair and RecF pathway recombination. The polypeptide is DNA repair protein RecO (Desulforamulus reducens (strain ATCC BAA-1160 / DSM 100696 / MI-1) (Desulfotomaculum reducens)).